A 263-amino-acid chain; its full sequence is MDQTPRRMLGQPLSSPATQPKKRSTSVMSFFSKVSWNLRLQKQEPLKNVFFILAETARDPSVKKRHMVMRGLGTMACETPDKVRKYKKIILDLLVHGLYDPVSSEVIHESMKTLTIILGKMQGKALGSFFIDITLQTRTLLDDENDSLRYSAFVLFGQLADLAGRKWKSFFTRQVKQTQDSLLTHLQDRNPQVAKACKTTFRACSPYLRQSKDYSFQNEEDQRNPKLCRQLVSERGQETFFQSLRSRCRCKAEGGRHTRELPP.

The disordered stretch occupies residues 1-21 (MDQTPRRMLGQPLSSPATQPK). An HEAT repeat occupies 128–163 (SFFIDITLQTRTLLDDENDSLRYSAFVLFGQLADLA).

Its subcellular location is the nucleus. It is found in the nucleolus. This is Protein maestro (MRO) from Bos taurus (Bovine).